The chain runs to 406 residues: MIITSLLDTDLYKFTMMQVVLHQFPGAQVEYRFKCRNPGVQLAPYVAEIRGEIRSLCSLQFQDAELDYLRSMRFIKSDFVDFLGLFRLNEKYISVAPRPGGEIDICIRGPWLHTILFEIPVLAIVNEVYFRNTQKVPDFPEGRRRLDAKIALLQAEGLEELKIADYGTRRRFSRAWHEEVLRVLVARLGTGDQCAEAPAGPGQFAGTSNVLYAMKLGVTPLGTMAHEYLQACQALGPRLRDSQVFGFEIWAREYRGDLGIALSDVYGMSAFLRDFDLYFCKLFDGARQDSGDPFAWGERLLAHYRKLRVDPQSKTLIFSDALTVTRTIELYRQFRGRCQLAFGIGTHLTNDLGSPPAHEPLQVVIKMTRCNGQPVAKLADSPGKGMCDDEKYLAYLRQVFDIPAQA.

The residue at position 226 (H226) is a Phosphohistidine; by autocatalysis.

It belongs to the NAPRTase family. In terms of processing, transiently phosphorylated on a His residue during the reaction cycle. Phosphorylation strongly increases the affinity for substrates and increases the rate of nicotinate D-ribonucleotide production. Dephosphorylation regenerates the low-affinity form of the enzyme, leading to product release.

It catalyses the reaction nicotinate + 5-phospho-alpha-D-ribose 1-diphosphate + ATP + H2O = nicotinate beta-D-ribonucleotide + ADP + phosphate + diphosphate. The protein operates within cofactor biosynthesis; NAD(+) biosynthesis; nicotinate D-ribonucleotide from nicotinate: step 1/1. In terms of biological role, catalyzes the synthesis of beta-nicotinate D-ribonucleotide from nicotinate and 5-phospho-D-ribose 1-phosphate at the expense of ATP. The protein is Nicotinate phosphoribosyltransferase of Verminephrobacter eiseniae (strain EF01-2).